The primary structure comprises 237 residues: Ig heavy chain Mem5 (237 aa).

Ig-like domains are found at residues 1–119 (EVKL…LTVS) and 126–218 (PSVY…KKIE). A disulfide bridge links C22 with C98. The interval 101–105 (VDYGT) is d segment. Residues 106-120 (NYDYWGQGTTLTVSS) are JH2 segment. A disulfide bridge links C147 with C202.

It is found in the secreted. Its function is as follows. Anti-influenza H3N2 neuraminidase antibody. This chain is Ig heavy chain Mem5, found in Mus musculus (Mouse).